An 818-amino-acid polypeptide reads, in one-letter code: Auxin response factor 12 (818 aa).

Positions 1–10 are enriched in low complexity; that stretch reads MSSSSAASIG. The disordered stretch occupies residues 1 to 24; the sequence is MSSSSAASIGPPQPPPPPAPPEEE. Residues 11-20 show a composition bias toward pro residues; sequence PPQPPPPPAP. A DNA-binding region (TF-B3) is located at residues 135–237; sequence FCKTLTASDT…QLLLGIRRAS (103 aa). Disordered regions lie at residues 526 to 565 and 629 to 648; these read NDQK…FSDP and GSVL…NKIG. Over residues 629-640 the composition is skewed to polar residues; sequence GSVLHNSPTSKD. The region spanning 719-803 is the PB1 domain; it reads RTFVKVYKSG…WYIKILSPED (85 aa).

The protein belongs to the ARF family. Homodimers and heterodimers. As to expression, expressed in roots, culms, leaves and young panicles.

The protein localises to the nucleus. Its function is as follows. Auxin response factors (ARFs) are transcriptional factors that bind specifically to the DNA sequence 5'-TGTCTC-3' found in the auxin-responsive promoter elements (AuxREs). The chain is Auxin response factor 12 (ARF12) from Oryza sativa subsp. japonica (Rice).